The sequence spans 119 residues: Ribosome-binding factor A (119 aa).

It belongs to the RbfA family. Monomer. Binds 30S ribosomal subunits, but not 50S ribosomal subunits or 70S ribosomes.

Its subcellular location is the cytoplasm. Its function is as follows. One of several proteins that assist in the late maturation steps of the functional core of the 30S ribosomal subunit. Associates with free 30S ribosomal subunits (but not with 30S subunits that are part of 70S ribosomes or polysomes). Required for efficient processing of 16S rRNA. May interact with the 5'-terminal helix region of 16S rRNA. The polypeptide is Ribosome-binding factor A (Geobacter sp. (strain M21)).